A 179-amino-acid polypeptide reads, in one-letter code: Gut granule loss protein 3 (179 aa).

The tract at residues 40-59 (DLDSASSGVGSSTCTEEQES) is disordered. Positions 42 to 54 (DSASSGVGSSTCT) are enriched in polar residues.

The protein is Gut granule loss protein 3 (glo-3) of Caenorhabditis elegans.